Consider the following 128-residue polypeptide: uncharacterized protein (128 aa).

One can recognise a VOC domain in the interval 1 to 126 (MHHIELYVSD…DRIKVELVAP (126 aa)).

This is an uncharacterized protein from Bacillus subtilis (strain 168).